A 540-amino-acid chain; its full sequence is MKLLAVRRLFRIQRVVIRYRLDDLLFEQPLLPWWLASLRLLMPWRWLPRKPTELSRGARLRLALQDLGPIFIKFGQLLSTRRDLLPTDIADELMLLQDRVPPFDPQKAVALIEEQLGAKVGEVFSRFDVEPLASASVAQVHAARLKTGEEVVVKVVRPGLKPVIAQDLAWLFLIAKAAERASADARRLHPVEIVGDYEKTIYDELDLLREAANASQLRRNFEGSELMYVPQVYWDLCRPKVLVMERIYGVPVTDMVTLADQRTDMKLLAERGVEVFFTQVFRDSFFHADMHPGNIFVSTVKPWSPQYIAIDCGIVGSLTAEDQDYLARNLIAFFKRDYRRVAQLHIDSGWVPAHTKVNEFEAAIRTVCEPIFEKPLKDISFGQVLMRLFQTARRFNMEVQPQLVLLQKTLLNIEGLGRQLYPDLDLWSTAKPFLERWMRDRYSPKAVFGNIHGQVEQLPHLANMARDLLERLSQPHLNDPQLPERRRQGDRWALRLLGAGLLGGGAVLAAGAAEAASLAAPAAWPAWLMLAAGLYLIVRQ.

A helical membrane pass occupies residues 24–44; that stretch reads LLFEQPLLPWWLASLRLLMPW. The 369-residue stretch at 126 to 494 folds into the Protein kinase domain; the sequence is RFDVEPLASA…RRRQGDRWAL (369 aa). ATP-binding positions include 132–140 and Lys-154; that span reads LASASVAQV. Residue Asp-289 is the Proton acceptor of the active site. 2 helical membrane-spanning segments follow: residues 496–516 and 518–538; these read LLGA…AEAA and LAAP…YLIV.

This sequence belongs to the ABC1 family. UbiB subfamily.

It is found in the cell inner membrane. It participates in cofactor biosynthesis; ubiquinone biosynthesis [regulation]. Functionally, is probably a protein kinase regulator of UbiI activity which is involved in aerobic coenzyme Q (ubiquinone) biosynthesis. The chain is Probable protein kinase UbiB from Pseudomonas putida (strain GB-1).